The primary structure comprises 107 residues: MVVRVFVASCSGFVAIKKKQQDVVRFLEANKIEFEEVDITMSEEQRQWMYKNIPPEKKPAQGNPLPPQIFNGDRYCGDYDSFFESKESNTVFSFLGLKPRPASTAEP.

The SH3-binding motif lies at 61–67 (QGNPLPP).

The protein belongs to the SH3BGR family.

The protein resides in the nucleus. The chain is SH3 domain-binding glutamic acid-rich-like protein 2 (Sh3bgrl2) from Mus musculus (Mouse).